A 175-amino-acid polypeptide reads, in one-letter code: Peptide deformylase (175 aa).

Residues Cys94 and His136 each coordinate Fe cation. Residue Glu137 is part of the active site. His140 provides a ligand contact to Fe cation.

This sequence belongs to the polypeptide deformylase family. Fe(2+) serves as cofactor.

It catalyses the reaction N-terminal N-formyl-L-methionyl-[peptide] + H2O = N-terminal L-methionyl-[peptide] + formate. Its function is as follows. Removes the formyl group from the N-terminal Met of newly synthesized proteins. Requires at least a dipeptide for an efficient rate of reaction. N-terminal L-methionine is a prerequisite for activity but the enzyme has broad specificity at other positions. The protein is Peptide deformylase of Brucella suis biovar 1 (strain 1330).